The sequence spans 330 residues: tRNA U34 carboxymethyltransferase (330 aa).

Carboxy-S-adenosyl-L-methionine contacts are provided by residues K91, W105, K110, G130, 152–154, 181–182, M196, Y200, and R315; these read DPS and IE.

Belongs to the class I-like SAM-binding methyltransferase superfamily. CmoB family. Homotetramer.

The catalysed reaction is carboxy-S-adenosyl-L-methionine + 5-hydroxyuridine(34) in tRNA = 5-carboxymethoxyuridine(34) in tRNA + S-adenosyl-L-homocysteine + H(+). Functionally, catalyzes carboxymethyl transfer from carboxy-S-adenosyl-L-methionine (Cx-SAM) to 5-hydroxyuridine (ho5U) to form 5-carboxymethoxyuridine (cmo5U) at position 34 in tRNAs. The sequence is that of tRNA U34 carboxymethyltransferase from Shewanella loihica (strain ATCC BAA-1088 / PV-4).